The chain runs to 584 residues: UvrABC system protein C (584 aa).

The 78-residue stretch at 14–91 folds into the GIY-YIG domain; the sequence is HKPGCYLWKD…IKTHLPKYNI (78 aa). The UVR domain occupies 192–227; it reads DHILMILQTKEQHAVTKLDFENAQKYAEQQKALTSI.

This sequence belongs to the UvrC family. In terms of assembly, interacts with UvrB in an incision complex.

It localises to the cytoplasm. Its function is as follows. The UvrABC repair system catalyzes the recognition and processing of DNA lesions. UvrC both incises the 5' and 3' sides of the lesion. The N-terminal half is responsible for the 3' incision and the C-terminal half is responsible for the 5' incision. The sequence is that of UvrABC system protein C from Ureaplasma parvum serovar 3 (strain ATCC 27815 / 27 / NCTC 11736).